The primary structure comprises 397 residues: uncharacterized protein (397 aa).

Transmembrane regions (helical) follow at residues tryptophan 142–alanine 162, serine 191–leucine 211, alanine 242–leucine 258, and alanine 260–phenylalanine 280.

Belongs to the cation diffusion facilitator (CDF) transporter (TC 2.A.4) family. SLC30A subfamily.

It localises to the membrane. This is an uncharacterized protein from Schizosaccharomyces pombe (strain 972 / ATCC 24843) (Fission yeast).